A 104-amino-acid chain; its full sequence is Proteasome subunit beta type-8 (104 aa).

This sequence belongs to the peptidase T1B family. As to quaternary structure, the 26S proteasome consists of a 20S proteasome core and two 19S regulatory subunits. The 20S proteasome core is composed of 28 subunits that are arranged in four stacked rings, resulting in a barrel-shaped structure. The two end rings are each formed by seven alpha subunits, and the two central rings are each formed by seven beta subunits. The catalytic chamber with the active sites is on the inside of the barrel. Component of the immunoproteasome, where it displaces the equivalent housekeeping subunit PSMB5. Component of the spermatoproteasome, a form of the proteasome specifically found in testis. Directly interacts with POMP.

It localises to the cytoplasm. Its subcellular location is the nucleus. The catalysed reaction is Cleavage of peptide bonds with very broad specificity.. The proteasome is a multicatalytic proteinase complex which is characterized by its ability to cleave peptides with Arg, Phe, Tyr, Leu, and Glu adjacent to the leaving group at neutral or slightly basic pH. The proteasome has an ATP-dependent proteolytic activity. This subunit is involved in antigen processing to generate class I binding peptides. May participate in the generation of spliced peptides resulting from the ligation of two separate proteasomal cleavage products that are not contiguous in the parental protein. Required for adipocyte differentiation. This is Proteasome subunit beta type-8 (PSMB8) from Sus scrofa (Pig).